The sequence spans 444 residues: Homocysteine/cysteine synthase (444 aa).

Phosphoserine is present on serine 44. Lysine 160 is covalently cross-linked (Glycyl lysine isopeptide (Lys-Gly) (interchain with G-Cter in ubiquitin)). The residue at position 209 (lysine 209) is an N6-(pyridoxal phosphate)lysine.

Belongs to the trans-sulfuration enzymes family. As to quaternary structure, homotetramer. Requires pyridoxal 5'-phosphate as cofactor.

Its subcellular location is the cytoplasm. It catalyses the reaction O-acetyl-L-homoserine + methanethiol = L-methionine + acetate + H(+). It carries out the reaction O-acetyl-L-homoserine + hydrogen sulfide = L-homocysteine + acetate. The enzyme catalyses O-acetyl-L-serine + hydrogen sulfide = L-cysteine + acetate. Its pathway is amino-acid biosynthesis; L-methionine biosynthesis via de novo pathway; L-homocysteine from O-acetyl-L-homoserine. Functionally, catalyzes the conversion of O-acetyl-L-homoserine (OAH) into homocysteine in the methionine biosynthesis pathway. Required to efficiently reduce toxic levels of hydrogen sulfide generated when the sulfate assimilation pathway (SAP) is active. Also catalyzes the conversion of O-acetylserine (OAS) into cysteine, the last step in the cysteine biosynthesis pathway. However, it seems that in S.cerevisiae cysteine biosynthesis occurs exclusively through the cystathionine pathway and not via direct incorporation of sulfur into OAS. It therefore has no metabolic role in cysteine biosynthesis and may only have a regulatory role controlling OAS levels. The polypeptide is Homocysteine/cysteine synthase (Saccharomyces cerevisiae (strain ATCC 204508 / S288c) (Baker's yeast)).